A 498-amino-acid polypeptide reads, in one-letter code: Glutathione hydrolase 6 (498 aa).

Residues 1 to 49 lie on the Cytoplasmic side of the membrane; it reads MDATTGAVLYQKLQLWEPGMESEEEEEEEEIAEPLVLSLRRLQNTPGNK. A helical; Signal-anchor for type II membrane protein membrane pass occupies residues 50-70; that stretch reads VGGLPGAWTRLLAGLLLLAVS. At 71-498 the chain is on the extracellular side; sequence SSLALRQLQG…PSGCCPFQGY (428 aa). Residues asparagine 162, asparagine 167, and asparagine 376 are each glycosylated (N-linked (GlcNAc...) asparagine).

It belongs to the gamma-glutamyltransferase family. Heterodimer composed of the light and heavy chains. The active site is located in the light chain. Cleaved by autocatalysis into a large and a small subunit and the autocatalytic cleavage is essential to the functional activation of the enzyme.

It is found in the membrane. It carries out the reaction an N-terminal (5-L-glutamyl)-[peptide] + an alpha-amino acid = 5-L-glutamyl amino acid + an N-terminal L-alpha-aminoacyl-[peptide]. It catalyses the reaction glutathione + H2O = L-cysteinylglycine + L-glutamate. The catalysed reaction is an S-substituted glutathione + H2O = an S-substituted L-cysteinylglycine + L-glutamate. Its pathway is sulfur metabolism; glutathione metabolism. Its function is as follows. Hydrolyzes and transfers gamma-glutamyl moieties from glutathione and other gamma-glutamyl compounds to acceptors. The protein is Glutathione hydrolase 6 of Rattus norvegicus (Rat).